A 476-amino-acid polypeptide reads, in one-letter code: Lactate utilization protein B (476 aa).

4Fe-4S ferredoxin-type domains lie at 304-334 (GTEF…GHSY) and 353-382 (YDDY…LHEL). [4Fe-4S] cluster is bound by residues Cys-313, Cys-316, Cys-319, Cys-323, Cys-366, Cys-369, and Cys-373.

It belongs to the LutB/YkgF family.

Its function is as follows. Is involved in L-lactate degradation and allows cells to grow with lactate as the sole carbon source. Has probably a role as an electron transporter during oxidation of L-lactate. The polypeptide is Lactate utilization protein B (Geobacillus thermodenitrificans (strain NG80-2)).